Here is a 458-residue protein sequence, read N- to C-terminus: UDP-N-acetylglucosamine 1-carboxyvinyltransferase (458 aa).

Residue 34–35 (KN) participates in phosphoenolpyruvate binding. Arg-104 is a binding site for UDP-N-acetyl-alpha-D-glucosamine. Residue Cys-128 is the Proton donor of the active site. Position 128 is a 2-(S-cysteinyl)pyruvic acid O-phosphothioketal (Cys-128). UDP-N-acetyl-alpha-D-glucosamine contacts are provided by Asp-319 and Ile-341.

Belongs to the EPSP synthase family. MurA subfamily.

Its subcellular location is the cytoplasm. The catalysed reaction is phosphoenolpyruvate + UDP-N-acetyl-alpha-D-glucosamine = UDP-N-acetyl-3-O-(1-carboxyvinyl)-alpha-D-glucosamine + phosphate. It participates in cell wall biogenesis; peptidoglycan biosynthesis. In terms of biological role, cell wall formation. Adds enolpyruvyl to UDP-N-acetylglucosamine. The protein is UDP-N-acetylglucosamine 1-carboxyvinyltransferase of Prochlorococcus marinus (strain MIT 9515).